The primary structure comprises 258 residues: Large ribosomal subunit protein uL15c (258 aa).

Residues 1–65 (MSAASLIPVS…NVKSSGENVR (65 aa)) constitute a chloroplast transit peptide. The interval 67 to 90 (RLDNLGPQPGSRKRPKRKGRGIAA) is disordered. The span at 77-86 (SRKRPKRKGR) shows a compositional bias: basic residues.

It belongs to the universal ribosomal protein uL15 family. As to quaternary structure, part of the 50S ribosomal subunit.

Its subcellular location is the plastid. It localises to the chloroplast. The chain is Large ribosomal subunit protein uL15c (RPL15) from Pisum sativum (Garden pea).